Here is a 498-residue protein sequence, read N- to C-terminus: PE-PGRS family protein PE_PGRS33 (498 aa).

Residues 1 to 30 are essential for translocation to the cell surface; the sequence is MSFVVTIPEALAAVATDLAGIGSTIGTANA. The region spanning 1 to 93 is the PE domain; that stretch reads MSFVVTIPEA…AGSYAAAEAA (93 aa). Residues 140–260 form an interacts with TLR2 region; that stretch reads GNGGAGGSGA…GLFFGVGGAG (121 aa).

The protein belongs to the mycobacterial PE family. PGRS subfamily. Interacts with human TLR2.

It is found in the secreted. The protein resides in the cell wall. The protein localises to the cell surface. Its subcellular location is the cell outer membrane. Its activity is regulated as follows. Binding of Ca(2+) to PE_PGRS33 induces conformational changes and increases affinity for TLR2. Functionally, induces TNF-alpha release through human Toll-like receptor 2 (TLR2) signaling pathway, leading to macrophage apoptosis. The signaling pathway involves TLR2-dependent activation of the mitogen-activated protein kinase kinase kinase 5 (ASK1), which activates the p38 and JNK MAPKs, leading to enhanced expression of TNF-alpha and tumor necrosis factor receptor superfamily member 1A (TNFRI) genes. Signals are amplified through classical caspase 8-dependent mitochondrial release of cytochrome c, leading to the activation of caspases 9 and 3. Mediates Ca(2+)-dependent up-regulation of the anti-inflammatory cytokine IL-10. Mediates entry into macrophages in a TLR2-dependent mechanism and activates the TLR2-dependent pro-adhesive pathway. This is PE-PGRS family protein PE_PGRS33 from Mycobacterium tuberculosis (strain ATCC 25618 / H37Rv).